The chain runs to 448 residues: tRNA(Ile)-lysidine synthase (448 aa).

An ATP-binding site is contributed by 30-35 (GGGADS).

This sequence belongs to the tRNA(Ile)-lysidine synthase family.

Its subcellular location is the cytoplasm. It catalyses the reaction cytidine(34) in tRNA(Ile2) + L-lysine + ATP = lysidine(34) in tRNA(Ile2) + AMP + diphosphate + H(+). Its function is as follows. Ligates lysine onto the cytidine present at position 34 of the AUA codon-specific tRNA(Ile) that contains the anticodon CAU, in an ATP-dependent manner. Cytidine is converted to lysidine, thus changing the amino acid specificity of the tRNA from methionine to isoleucine. This chain is tRNA(Ile)-lysidine synthase, found in Idiomarina loihiensis (strain ATCC BAA-735 / DSM 15497 / L2-TR).